We begin with the raw amino-acid sequence, 325 residues long: MINIDPHFIHNLTNKLKTFDNFSLYVHVNPDFDAFGAAFAFKAFLAVYFPHKKAYVMGSHNIKADGKDLFPFEAAPIDDAFVKNSLAIIFDTSNQERVLTQKHKLAKETVRIDHHPKTESFADLEWIDPAFSAAAEMVGYLILQMGYELNAEMAAYIYAGIITDTQRFSSSATTPQTFALTAKLLETGFNRNKVHDAVYLKPLLEHKYFSYVLNKAKITPNGLAYALLKKGTYKQFGVVSPLPMVHALNNIKGVKIWTTCYFNEDIKKWIGSIRSRSIPINNFAQMFGGGGHKYAAAFVLDDKRQFMKLVEIMDDFLAKQKHVNS.

It belongs to the mgp1/MG371 family.

This is an uncharacterized protein from Mycoplasma pneumoniae (strain ATCC 29342 / M129 / Subtype 1) (Mycoplasmoides pneumoniae).